We begin with the raw amino-acid sequence, 141 residues long: Phosphoribosyl-AMP cyclohydrolase (141 aa).

A Mg(2+)-binding site is contributed by D91. A Zn(2+)-binding site is contributed by C92. Mg(2+)-binding residues include D93 and D95. Residues C110 and C117 each contribute to the Zn(2+) site.

This sequence belongs to the PRA-CH family. In terms of assembly, homodimer. The cofactor is Mg(2+). Requires Zn(2+) as cofactor.

It is found in the cytoplasm. It catalyses the reaction 1-(5-phospho-beta-D-ribosyl)-5'-AMP + H2O = 1-(5-phospho-beta-D-ribosyl)-5-[(5-phospho-beta-D-ribosylamino)methylideneamino]imidazole-4-carboxamide. The protein operates within amino-acid biosynthesis; L-histidine biosynthesis; L-histidine from 5-phospho-alpha-D-ribose 1-diphosphate: step 3/9. In terms of biological role, catalyzes the hydrolysis of the adenine ring of phosphoribosyl-AMP. This chain is Phosphoribosyl-AMP cyclohydrolase, found in Brucella anthropi (strain ATCC 49188 / DSM 6882 / CCUG 24695 / JCM 21032 / LMG 3331 / NBRC 15819 / NCTC 12168 / Alc 37) (Ochrobactrum anthropi).